Reading from the N-terminus, the 342-residue chain is S-adenosylmethionine:tRNA ribosyltransferase-isomerase (342 aa).

It belongs to the QueA family. In terms of assembly, monomer.

The protein localises to the cytoplasm. The enzyme catalyses 7-aminomethyl-7-carbaguanosine(34) in tRNA + S-adenosyl-L-methionine = epoxyqueuosine(34) in tRNA + adenine + L-methionine + 2 H(+). It participates in tRNA modification; tRNA-queuosine biosynthesis. Transfers and isomerizes the ribose moiety from AdoMet to the 7-aminomethyl group of 7-deazaguanine (preQ1-tRNA) to give epoxyqueuosine (oQ-tRNA). In Campylobacter jejuni subsp. jejuni serotype O:2 (strain ATCC 700819 / NCTC 11168), this protein is S-adenosylmethionine:tRNA ribosyltransferase-isomerase.